The chain runs to 236 residues: UPF0173 metal-dependent hydrolase Mnod_3315 (236 aa).

Belongs to the UPF0173 family.

In Methylobacterium nodulans (strain LMG 21967 / CNCM I-2342 / ORS 2060), this protein is UPF0173 metal-dependent hydrolase Mnod_3315.